We begin with the raw amino-acid sequence, 445 residues long: N-succinylarginine dihydrolase (445 aa).

Substrate contacts are provided by residues 19–28, asparagine 110, and 137–138; these read AGLSFGNVAS and HR. Glutamate 174 is a catalytic residue. Arginine 214 contributes to the substrate binding site. Residue histidine 250 is part of the active site. Residues aspartate 252 and asparagine 363 each contribute to the substrate site. Cysteine 369 acts as the Nucleophile in catalysis.

The protein belongs to the succinylarginine dihydrolase family. In terms of assembly, homodimer.

The catalysed reaction is N(2)-succinyl-L-arginine + 2 H2O + 2 H(+) = N(2)-succinyl-L-ornithine + 2 NH4(+) + CO2. Its pathway is amino-acid degradation; L-arginine degradation via AST pathway; L-glutamate and succinate from L-arginine: step 2/5. Functionally, catalyzes the hydrolysis of N(2)-succinylarginine into N(2)-succinylornithine, ammonia and CO(2). This Shewanella halifaxensis (strain HAW-EB4) protein is N-succinylarginine dihydrolase.